Consider the following 212-residue polypeptide: MIKSKFIVIEGLEGAGKTHACICVQRILKENNIKNVILVRQPGSTPVAEKIRKLIKNNTYIEDFEKETELLLMYAARIQLVKKIIQPALKKGTWVISDRHDLSSLAYQGGGLGIKRKLINKLKYLFLQDFIPDLTIYLDVYPEIGLKRASKRNHLDRIEHRSLTFFKKTRASYLKNIKLDKKIIKINANLNIKIVTQNIKNQILKWLQQKVV.

Residue 11 to 18 (GLEGAGKT) participates in ATP binding.

This sequence belongs to the thymidylate kinase family.

It catalyses the reaction dTMP + ATP = dTDP + ADP. In terms of biological role, phosphorylation of dTMP to form dTDP in both de novo and salvage pathways of dTTP synthesis. In Buchnera aphidicola subsp. Schizaphis graminum (strain Sg), this protein is Thymidylate kinase.